The following is a 265-amino-acid chain: Putative hydro-lyase PST_2764 (265 aa).

Belongs to the D-glutamate cyclase family.

In Stutzerimonas stutzeri (strain A1501) (Pseudomonas stutzeri), this protein is Putative hydro-lyase PST_2764.